Reading from the N-terminus, the 74-residue chain is MFDVKAWAVYIVEWAAKDPYGFLTTVILVLTPLFIISAALSWKLAKMIETREREQKKKRKRQENIVKAKRAKKD.

The chain crosses the membrane as a helical span at residues 20–40 (YGFLTTVILVLTPLFIISAAL). A coiled-coil region spans residues 48–74 (IETREREQKKKRKRQENIVKAKRAKKD). The disordered stretch occupies residues 53-74 (REQKKKRKRQENIVKAKRAKKD). Residues 56–74 (KKKRKRQENIVKAKRAKKD) show a composition bias toward basic residues.

Belongs to the SMIM15 family.

The protein localises to the membrane. In Gallus gallus (Chicken), this protein is Small integral membrane protein 15 (SMIM15).